The sequence spans 497 residues: O-acetyltransferase PaAT-1 (497 aa).

N35 carries N-linked (GlcNAc...) asparagine glycosylation. The next 9 helical transmembrane spans lie at G69–I89, L107–S127, L157–Y177, L241–F261, V278–I298, A329–F349, P375–F395, I406–G426, and V443–V463.

The protein belongs to the acyltransferase 3 family.

It is found in the membrane. It functions in the pathway mycotoxin biosynthesis. Its function is as follows. O-acetyltransferase; part of the 2 gene clusters that mediate the biosynthesis of fusicoccins, diterpene glucosides that display phytohormone-like activity and function as potent activators of plasma membrane H(+)-ATPases in plants by modifying 14-3-3 proteins and cause the plant disease constriction canker. The first step in the pathway is performed by the fusicoccadiene synthase PaFS that possesses both prenyl transferase and terpene cyclase activity, converting isopentenyl diphosphate and dimethylallyl diphosphate into geranylgeranyl diphosphate (GGDP) and successively converting GGDP into fusicocca-2,10(14)-diene, a precursor for fusicoccin H. The second step is the oxidation at the C-8 position by the cytochrome P450 monooxygenase PaP450-2 to yield fusicocca-2,10(14)-diene-8-beta-ol. The cytochrome P450 monooxygenase PaP450-1 then catalyzes the hydroxylation at the C-16 position to produce fusicocca-2,10(14)-diene-8-beta,16-diol. The dioxygenase fc-dox then catalyzes the 16-oxydation of fusicocca-2,10(14)-diene-8-beta,16-diol to yield an aldehyde (8-beta-hydroxyfusicocca-1,10(14)-dien-16-al). The short-chain dehydrogenase/reductase fc-sdr catalyzes the reduction of the aldehyde to yield fusicocca-1,10(14)-diene-8-beta,16-diol. The next step is the hydroxylation at C-9 performed by the cytochrome P450 monooxygenase PaP450-3 that leads to fusicoccin H aglycon which is glycosylated to fusicoccin H by the O-glycosyltransferase PaGT. Hydroxylation at C-12 by the cytochrome P450 monooxygenase PaP450-4 leads then to the production of fusicoccin Q and is followed by methylation by the O-methyltransferase PaMT to yield fusicoccin P. Fusicoccin P is further converted to fusicoccin J via prenylation by the O-glucose prenyltransferase PaPT. Cytochrome P450 monooxygenase PaP450-5 then performs hydroxylation at C-19 to yield dideacetyl-fusicoccin A which is acetylated to 3'-O-deacetyl-fusicoccin A by the O-acetyltransferase PaAT-2. Finally, a another acetylation by the O-acetyltransferase PaAT-1 yields fusicoccin A. This chain is O-acetyltransferase PaAT-1, found in Phomopsis amygdali (Fusicoccum amygdali).